The chain runs to 472 residues: Guanine nucleotide-binding protein alpha-1 subunit (472 aa).

G2 carries the N-myristoyl glycine lipid modification. A lipid anchor (S-palmitoyl cysteine) is attached at C3. Positions 40–472 constitute a G-alpha domain; it reads NEIKLLLLGA…QQNLKKIGII (433 aa). The tract at residues 43 to 56 is G1 motif; it reads KLLLLGAGESGKST. The GTP site is built by E51, S52, G53, K54, S55, and T56. S55 contributes to the Mg(2+) binding site. The tract at residues 127–235 is insert; not present in other G-proteins; the sequence is LDYINASVAG…REIQGQNRRN (109 aa). The disordered stretch occupies residues 162-199; that stretch reads GRAKAAFDEDGNISNVKSDTDRDAETVTQNEDADRNNS. K165 is covalently cross-linked (Glycyl lysine isopeptide (Lys-Gly) (interchain with G-Cter in ubiquitin)). Residues 292 to 300 form a G2 motif region; the sequence is DILKGRIKT. GTP is bound by residues L294, T300, G322, N388, K389, D391, and A444. T300 is a binding site for Mg(2+). The interval 315–324 is G3 motif; the sequence is FKVLDAGGQR. Residues 384-391 are G4 motif; the sequence is ILFLNKID. A G5 motif region spans residues 442–447; sequence TCATDT.

This sequence belongs to the G-alpha family. G(q) subfamily. In terms of assembly, g proteins are composed of 3 units; alpha, beta and gamma. The alpha chain contains the guanine nucleotide binding site. In its GDP-bound form, binds to the G protein beta-gamma dimer STE4-STE18. Directly interacts with the beta subunit STE4. Probably forms preactivation complexes with unligated receptors STE2 and STE3. Interacts with FUS3. Pheromone-induced activation of GPA1 increases its association with FUS3. Interacts with SCP160. SCP160 binds specifically to the GTP-bound form of GPA1. Interacts with the phosphatidylinositol 3-kinase (PI3K) subunits VPS15 and VPS34 at the endosome. The GTP-bound form of GPA1 binds directly and selectively to the catalytic subunit VPS34, while the GDP-bound form binds to VPS15, which appears to function as an alternative G protein beta subunit for GPA1. Interacts with regulators of G protein signaling (RGS) proteins MDM1, RAX1, RGS2 and SST2, but SST2 alone binds preferentially to the transition state conformation of GPA1, indicating that it acts as a GAP for this G protein. The cofactor is Mg(2+). Post-translationally, N-myristoylation by NMT1 is pheromone-stimulated and required for palmitoylation of Cys-3. This lipid modification anchors the protein to membranes. Depalmitoylated by YLR118C/APT1. Monoubiquitination targets the protein for degradation to the vacuole, and polyubiquitination tags the protein for degradation by the proteasome. This may be an additional signaling regulation mechanism.

It is found in the cell membrane. It localises to the endosome membrane. With respect to regulation, alternates between an inactive form bound to GDP and an active form bound to GTP. Activated by the G protein coupled receptors (GPCRs) STE2 and STE3, which serve as guanine nucleotide-exchange factors (GEFs), and inactivated by SST2, probably acting as a GTPase-activating protein (GAP). Its function is as follows. Alpha subunit of the heterotrimeric guanine nucleotide-binding protein (G protein) that mediates mating pheromone signal transduction. Binding of alpha-factor or a-factor to its cognate transmembrane receptor STE2 and STE3, respectively, allows the receptor to serve as a guanine nucleotide exchange factor (GEF) on GPA1. The exchange of GDP for GTP on the G protein alpha subunit alters its interaction with the G protein beta subunit STE4, leading to dissociation of the G protein beta-gamma dimer STE4-STE18. The dissociated subunits activate downstream effectors to activate the mating response pathway and induce changes necessary to produce mating-competent cells. STE4-STE18 activate the downstream pheromone signaling MAP kinase cascade leading to expression of mating-specific genes, inducing cell cycle arrest in G1, promoting polarized cell growth to form mating projections (shmoos), and establishing the changes in plasma membrane, cell wall and nuclear envelope to permit cell-cell fusion (plasmogamy) and fusion of the two haploid nuclei (karyogamy). GPA1 transmits a signal that requires direct binding to the effector enzyme PI3K located at the endosome, promoting increased PI3 production. The intrinsic GTPase activity of GPA1 determines the duration of signaling, and is dramatically accelerated by the RGS protein SST2. In unstimulated cells, GDP-bound GPA1 sequesters the G protein beta-gamma subunit STE4-STE18, preventing it from activating the downstream effectors. Also down-regulates the signal by inhibiting the pheromone-induced accumulation of FUS3 in the nucleus. This Saccharomyces cerevisiae (strain ATCC 204508 / S288c) (Baker's yeast) protein is Guanine nucleotide-binding protein alpha-1 subunit (GPA1).